Here is a 309-residue protein sequence, read N- to C-terminus: Homoserine kinase (309 aa).

91–101 (PIGSGLGSSAC) lines the ATP pocket.

This sequence belongs to the GHMP kinase family. Homoserine kinase subfamily.

The protein localises to the cytoplasm. The enzyme catalyses L-homoserine + ATP = O-phospho-L-homoserine + ADP + H(+). Its pathway is amino-acid biosynthesis; L-threonine biosynthesis; L-threonine from L-aspartate: step 4/5. Catalyzes the ATP-dependent phosphorylation of L-homoserine to L-homoserine phosphate. The chain is Homoserine kinase from Pectobacterium carotovorum subsp. carotovorum (strain PC1).